The chain runs to 310 residues: Putative S-adenosyl-L-methionine-dependent methyltransferase MMAR_0357 (310 aa).

S-adenosyl-L-methionine is bound by residues Asp-132 and 161–162; that span reads DL.

The protein belongs to the UPF0677 family.

Exhibits S-adenosyl-L-methionine-dependent methyltransferase activity. The polypeptide is Putative S-adenosyl-L-methionine-dependent methyltransferase MMAR_0357 (Mycobacterium marinum (strain ATCC BAA-535 / M)).